We begin with the raw amino-acid sequence, 168 residues long: Probable deoxyuridine 5'-triphosphate nucleotidohydrolase (168 aa).

Belongs to the dCTP deaminase family. Archaeal dUTPase subfamily.

It catalyses the reaction dUTP + H2O = dUMP + diphosphate + H(+). It participates in pyrimidine metabolism; dUMP biosynthesis; dUMP from dCTP (dUTP route): step 2/2. Functionally, this enzyme is involved in nucleotide metabolism: it produces dUMP, the immediate precursor of thymidine nucleotides and it decreases the intracellular concentration of dUTP so that uracil cannot be incorporated into DNA. The protein is Probable deoxyuridine 5'-triphosphate nucleotidohydrolase of Archaeoglobus fulgidus (strain ATCC 49558 / DSM 4304 / JCM 9628 / NBRC 100126 / VC-16).